The primary structure comprises 371 residues: Putative phosphoserine aminotransferase (371 aa).

An L-glutamate-binding site is contributed by arginine 45. Phenylalanine 103, threonine 149, aspartate 171, and glutamine 194 together coordinate pyridoxal 5'-phosphate. Residue lysine 195 is modified to N6-(pyridoxal phosphate)lysine. A pyridoxal 5'-phosphate-binding site is contributed by asparagine 246–threonine 247.

The protein belongs to the class-V pyridoxal-phosphate-dependent aminotransferase family. SerC subfamily. Homodimer. Pyridoxal 5'-phosphate serves as cofactor.

It is found in the cytoplasm. It carries out the reaction O-phospho-L-serine + 2-oxoglutarate = 3-phosphooxypyruvate + L-glutamate. It catalyses the reaction 4-(phosphooxy)-L-threonine + 2-oxoglutarate = (R)-3-hydroxy-2-oxo-4-phosphooxybutanoate + L-glutamate. The protein operates within amino-acid biosynthesis; L-serine biosynthesis; L-serine from 3-phospho-D-glycerate: step 2/3. It functions in the pathway cofactor biosynthesis; pyridoxine 5'-phosphate biosynthesis; pyridoxine 5'-phosphate from D-erythrose 4-phosphate: step 3/5. In terms of biological role, catalyzes the reversible conversion of 3-phosphohydroxypyruvate to phosphoserine and of 3-hydroxy-2-oxo-4-phosphonooxybutanoate to phosphohydroxythreonine. The protein is Putative phosphoserine aminotransferase of Mycolicibacterium vanbaalenii (strain DSM 7251 / JCM 13017 / BCRC 16820 / KCTC 9966 / NRRL B-24157 / PYR-1) (Mycobacterium vanbaalenii).